The primary structure comprises 103 residues: Matrix Gla protein (103 aa).

A signal peptide spans 1 to 19 (MRSLLLLTVLAALVVAILC). Glu-21 is modified (4-carboxyglutamate). Phosphoserine occurs at positions 22, 25, and 28. The 47-residue stretch at 51–97 (MAKAQERVREQRKPAYELNREACDDYKLCERYAMVYGYNAAYNRYFR) folds into the Gla domain. 4 positions are modified to 4-carboxyglutamate: Glu-56, Glu-60, Glu-67, and Glu-71. An intrachain disulfide couples Cys-73 to Cys-79.

It belongs to the osteocalcin/matrix Gla protein family. Requires vitamin K-dependent gamma-carboxylation for its function.

It localises to the secreted. Associates with the organic matrix of bone and cartilage. Thought to act as an inhibitor of bone formation. The polypeptide is Matrix Gla protein (MGP) (Oryctolagus cuniculus (Rabbit)).